The sequence spans 489 residues: Dihydropyrimidinase 1 (489 aa).

Residues histidine 61, histidine 63, and lysine 156 each contribute to the Zn(2+) site. Lysine 156 bears the N6-carboxylysine mark. Tyrosine 161 is a binding site for substrate. The Zn(2+) site is built by histidine 189 and histidine 245. Serine 295 contacts substrate. Position 323 (aspartate 323) interacts with Zn(2+). Asparagine 344 provides a ligand contact to substrate.

Belongs to the metallo-dependent hydrolases superfamily. Hydantoinase/dihydropyrimidinase family. As to quaternary structure, homotetramer. Requires Zn(2+) as cofactor. Carboxylation allows a single lysine to coordinate two zinc ions.

The protein resides in the nucleus. It carries out the reaction 5,6-dihydrouracil + H2O = 3-(carbamoylamino)propanoate + H(+). The sequence is that of Dihydropyrimidinase 1 (dhp-1) from Caenorhabditis briggsae.